The primary structure comprises 63 residues: Large ribosomal subunit protein uL29 (63 aa).

It belongs to the universal ribosomal protein uL29 family.

This Marinomonas sp. (strain MWYL1) protein is Large ribosomal subunit protein uL29.